We begin with the raw amino-acid sequence, 795 residues long: Probable diacylglycerol kinase 3 (795 aa).

EF-hand domains follow at residues 170-205 (TPEN…MMNV) and 215-250 (ELEQ…NIPL). Asp183, Asp185, Asn187, Glu194, Asp228, Asp230, Asp232, and Glu239 together coordinate Ca(2+). 2 consecutive Phorbol-ester/DAG-type zinc fingers follow at residues 265–316 (SHVW…ATNC) and 329–375 (YHHW…AQEC). The region spanning 423–558 (NDCRPLLVLV…MDRWQIKIEI (136 aa)) is the DAGKc domain.

Belongs to the eukaryotic diacylglycerol kinase family. As to quaternary structure, monomer.

It catalyses the reaction a 1,2-diacyl-sn-glycerol + ATP = a 1,2-diacyl-sn-glycero-3-phosphate + ADP + H(+). Its function is as follows. Involved in AFD-neuron mediated thermotaxis. Regulates behavior to environmental temperature. Thought to have a role in olfactory adaptation by affecting diacylglycerol levels. This chain is Probable diacylglycerol kinase 3 (dgk-3), found in Caenorhabditis elegans.